The sequence spans 783 residues: DNA ligase (783 aa).

NAD(+) is bound by residues 42-46 (DAEYD), 91-92 (SL), and glutamate 125. Lysine 127 (N6-AMP-lysine intermediate) is an active-site residue. Positions 148, 185, 302, and 326 each coordinate NAD(+). The Zn(2+) site is built by cysteine 421, cysteine 423, cysteine 445, and cysteine 451. The BRCT domain maps to 705 to 783 (KTDTAVAGKT…EDEWLELVAG (79 aa)).

This sequence belongs to the NAD-dependent DNA ligase family. LigA subfamily. Requires Mg(2+) as cofactor. The cofactor is Mn(2+).

The enzyme catalyses NAD(+) + (deoxyribonucleotide)n-3'-hydroxyl + 5'-phospho-(deoxyribonucleotide)m = (deoxyribonucleotide)n+m + AMP + beta-nicotinamide D-nucleotide.. Functionally, DNA ligase that catalyzes the formation of phosphodiester linkages between 5'-phosphoryl and 3'-hydroxyl groups in double-stranded DNA using NAD as a coenzyme and as the energy source for the reaction. It is essential for DNA replication and repair of damaged DNA. In Caulobacter vibrioides (strain ATCC 19089 / CIP 103742 / CB 15) (Caulobacter crescentus), this protein is DNA ligase.